Consider the following 857-residue polypeptide: Putative serine/threonine-protein kinase receptor (857 aa).

Residues 1-32 (MKGARNIYHHSYMSFLLVFVVMILIHPALSIY) form the signal peptide. At 33–446 (INTLSSTESL…IAKKRNASGK (414 aa)) the chain is on the extracellular side. A Bulb-type lectin domain is found at 35–155 (TLSSTESLTI…SNNDASEYLW (121 aa)). Asn47, Asn120, Asn196, Asn260, Asn389, and Asn442 each carry an N-linked (GlcNAc...) asparagine glycan. Positions 350 to 433 (CSGDGFTRMK…DGQDLYVRLA (84 aa)) constitute a PAN domain. 2 disulfide bridges follow: Cys380–Cys405 and Cys388–Cys390. Residues 447–466 (IISLTVGVSVLLLLIMFCLW) traverse the membrane as a helical segment. At 467–857 (KRKQKRAKAS…QYTCSVIDAR (391 aa)) the chain is on the cytoplasmic side. One can recognise a Protein kinase domain in the interval 528–779 (FSSCNKLGQG…PSIFQPQEVL (252 aa)). ATP is bound by residues 534–542 (LGQGGFGIV) and Lys556. Catalysis depends on Asp653, which acts as the Proton acceptor.

It belongs to the protein kinase superfamily. Ser/Thr protein kinase family. As to expression, predominantly in the pistil and anther.

The protein resides in the membrane. The enzyme catalyses L-seryl-[protein] + ATP = O-phospho-L-seryl-[protein] + ADP + H(+). It carries out the reaction L-threonyl-[protein] + ATP = O-phospho-L-threonyl-[protein] + ADP + H(+). Its function is as follows. Involved in sporophytic self-incompatibility system (the inability of flowering plants to achieve self-fertilization), probably acting in combination with S-locus-specific glycoproteins. Interaction with a ligand in the extracellular domain triggers the protein kinase activity of the cytoplasmic domain. This Brassica oleracea var. viridis (Flowering kale) protein is Putative serine/threonine-protein kinase receptor (SRK6).